The sequence spans 773 residues: Polymeric immunoglobulin receptor (773 aa).

The first 18 residues, 1 to 18 (MALFLLTCLLAVFSAATA), serve as a signal peptide directing secretion. Over 19-647 (QSSLLGPSSI…SASGQSGSAK (629 aa)) the chain is Extracellular. Residues 25–131 (PSSIFGPGEV…RGLDFGVNVL (107 aa)) form the Ig-like V-type 1; required for binding to polymeric IgA and IgM domain. Intrachain disulfides connect cysteine 46-cysteine 115, cysteine 155-cysteine 225, cysteine 260-cysteine 324, cysteine 369-cysteine 438, and cysteine 478-cysteine 538. An N-linked (GlcNAc...) asparagine; in variant N-88 glycan is attached at lysine 88. A glycan (N-linked (GlcNAc...) asparagine) is linked at asparagine 108. Ig-like V-type domains are found at residues 138–232 (PDDV…SDPT), 233–340 (AEEQ…TQLR), 352–455 (RSPP…LQIV), and 461–557 (PTID…VELT). Residue asparagine 418 is glycosylated (N-linked (GlcNAc...) asparagine). The interval 619-641 (AVQSAEDPASGSRASVDASSASG) is disordered. Residues 632 to 641 (ASVDASSASG) show a composition bias toward low complexity. Residues 648–670 (VLISTLVPLGLVLAAGAMAVAIA) traverse the membrane as a helical segment. Residues 671–773 (RARHRRNVDR…AEHQDGPKEA (103 aa)) are Cytoplasmic-facing. Serine 682, serine 691, serine 698, and serine 744 each carry phosphoserine. The tract at residues 725-746 (ATATESTVEIEEPKKAKRSSKE) is disordered. Residues 735–746 (EEPKKAKRSSKE) show a composition bias toward basic and acidic residues.

Interacts (mainly via CDR1-like domain) with dimeric IgA. Interacts (mainly via CDR2-like domain) with pentameric IgM. As to quaternary structure, either free or part of the secretory IgA (sIgA) complex that consists of two, four or five IgA monomers, and two additional non-Ig polypeptides, namely the JCHAIN and the secretory component (the proteolytic product of PIGR). Free secretory component interacts with bacterial antigens toxA of C.difficile and eae of E.coli. N-glycosylated. N-glycosylation is required for anchoring IgA molecules to mucus, but is not necessary for Ig binding.

It localises to the cell membrane. The protein localises to the secreted. In terms of biological role, mediates selective transcytosis of polymeric IgA and IgM across mucosal epithelial cells. Binds polymeric IgA and IgM at the basolateral surface of epithelial cells. The complex is then transported across the cell to be secreted at the apical surface. During this process, a cleavage occurs that separates the extracellular (known as the secretory component) from the transmembrane segment. Its function is as follows. Through its N-linked glycans ensures anchoring of secretory IgA (sIgA) molecules to mucus lining the epithelial surface to neutralize extracellular pathogens. On its own (free form) may act as a non-specific microbial scavenger to prevent pathogen interaction with epithelial cells. In Oryctolagus cuniculus (Rabbit), this protein is Polymeric immunoglobulin receptor (PIGR).